The chain runs to 325 residues: Cytosolic Fe-S cluster assembly factor Nubp1 homolog (325 aa).

The segment at 1-26 (MSSGADVPSDAPAHCPGTQSDDAGKA) is disordered. Residues Cys-15, Cys-29, Cys-32, and Cys-38 each contribute to the [4Fe-4S] cluster site. Residue 68-75 (GKGGVGKS) coordinates ATP. Residues Cys-243 and Cys-246 each contribute to the [4Fe-4S] cluster site.

It belongs to the Mrp/NBP35 ATP-binding proteins family. NUBP1/NBP35 subfamily. As to quaternary structure, heterotetramer of 2 Nubp1 and 2 Nubp2 chains. The cofactor is [4Fe-4S] cluster.

It is found in the cytoplasm. Functionally, component of the cytosolic iron-sulfur (Fe/S) protein assembly (CIA) machinery. Required for maturation of extramitochondrial Fe-S proteins. The Nubp1-Nubp2 heterotetramer forms a Fe-S scaffold complex, mediating the de novo assembly of an Fe-S cluster and its transfer to target apoproteins. The protein is Cytosolic Fe-S cluster assembly factor Nubp1 homolog of Anopheles gambiae (African malaria mosquito).